The following is a 67-amino-acid chain: DNA gyrase inhibitor YacG (67 aa).

Zn(2+)-binding residues include cysteine 9, cysteine 12, cysteine 28, and cysteine 32. Residues 46-67 (RIPSSGDLNDSDDWSEQPLDRQ) are disordered.

This sequence belongs to the DNA gyrase inhibitor YacG family. As to quaternary structure, interacts with GyrB. Zn(2+) serves as cofactor.

Functionally, inhibits all the catalytic activities of DNA gyrase by preventing its interaction with DNA. Acts by binding directly to the C-terminal domain of GyrB, which probably disrupts DNA binding by the gyrase. In Erwinia tasmaniensis (strain DSM 17950 / CFBP 7177 / CIP 109463 / NCPPB 4357 / Et1/99), this protein is DNA gyrase inhibitor YacG.